A 269-amino-acid polypeptide reads, in one-letter code: GATA zinc finger domain-containing protein 1 (269 aa).

The GATA-type zinc finger occupies 9–33 (CSVCKTTSSSMWKKGAQGEILCHHC). The tract at residues 63–115 (ATFASTSATPPQSNGGGGGKQSKQEIHRRSARLRNTKYKSAPAAEKKVSTKGK) is disordered. Lys262 is covalently cross-linked (Glycyl lysine isopeptide (Lys-Gly) (interchain with G-Cter in SUMO2)).

As to quaternary structure, component of a chromatin complex, at least composed of KDM5A, GATAD1 and EMSY. In terms of tissue distribution, ubiquitously expressed among various tissue types. Expressed in left ventricular myocytes.

It is found in the nucleus. Its function is as follows. Component of some chromatin complex recruited to chromatin sites methylated 'Lys-4' of histone H3 (H3K4me), with a preference for trimethylated form (H3K4me3). In Homo sapiens (Human), this protein is GATA zinc finger domain-containing protein 1 (GATAD1).